Consider the following 519-residue polypeptide: MAIIPWKAIDESLSLRWKIIVTLLAIYTLRIIGTRITTTRARRKFREQHGCAPVTCQLPLKDPFFGIDFILKLMRVFKEKRLLETFANDFYKTVGITFLVERGSQQTIFTIDPENIKTVLALKFKDYGLAFRAPLFNPVTGGGMFVSDGEEWAHSRALMRPTFARDQVADLALTNRHVTDLVSKIPINTTFNLQELLFDFTMDTGTEFLFGESTDTLCNPTKASQEFTKAFDFTLKDVAYQARLGPLRRFQGSRSKALEVYQVCRSYVERYVDQAMALRTSTLTGEVTRENEPQNRHDSLLRQLARSGVSKEKIRAELLSVLIAARDTTSNLLGNLFFVLARRPDIWTKIRDEVKHLDTNEPTYEQLRHLTYAKYCINESLRLHPPVPSNGRMAYRDTILPHGGGPNGDHPIHVPKGSMVNYTVYAMHRRKDLYGQDAEEFRPERWESLRPSWFFLPFNGGPRICLGQQYAITESLLVIMRFAQEFTSIQSMDAKPWTEEIALGCGNANGVYVSFQKLK.

A helical membrane pass occupies residues 12 to 34 (SLSLRWKIIVTLLAIYTLRIIGT). Cys-465 serves as a coordination point for heme.

It belongs to the cytochrome P450 family. It depends on heme as a cofactor.

It is found in the membrane. It functions in the pathway secondary metabolite biosynthesis. Cytochrome P450 monooxygenase; part of the gene cluster that mediates the biosynthesis of the gamma-pyrones fusapyrone (FPY) and deoxyfusapyrone (dFPY). FPY is an undecaketide and thus likely synthesized by the polyketide synthase FPY1 from acetyl-CoA functioning as starter unit and the addition of 10 malonyl-CoA extender units by successive Claisen-condensations. Next to this, FPY shares some rare features: C-glycosylated 4-deoxyglucose at C-3, a gem-dimethyl group at C-13, and an alpha-beta to beta-gamma double bond shift at C-20. During FPY biosynthesis mono-C-methyl groups are transferred to the tetra-, penta-, hexa- and heptaketide, while two C-methyl groups are transferred to the nonaketide, suggesting that the CMet domain is programmed to selectively catalyze two successive C-alpha-methylation reactions of the nonaketide, while other alpha-carbons are non- or mono-methylated only. While the origin of the 4'-deoxyglucose moiety remains opaque, its transfer to C-3 is most likely mediated by the C-glycosyltransferase FPY2. Next to this, the hydroxyl group present at C-33 and discriminating between FPY and dFPY, is likely to be installed by the cytochrome P450 monooxygenase FPY7. No putative function can be predicted for the remaining genes FPY3-FPY6. The sequence is that of Cytochrome P450 monooxygenase FPY7 from Fusarium mangiferae (Mango malformation disease fungus).